Consider the following 878-residue polypeptide: Phosphoenolpyruvate carboxylase (878 aa).

Catalysis depends on residues His-138 and Lys-545.

Belongs to the PEPCase type 1 family. The cofactor is Mg(2+).

The catalysed reaction is oxaloacetate + phosphate = phosphoenolpyruvate + hydrogencarbonate. In terms of biological role, forms oxaloacetate, a four-carbon dicarboxylic acid source for the tricarboxylic acid cycle. The polypeptide is Phosphoenolpyruvate carboxylase (Shewanella halifaxensis (strain HAW-EB4)).